The primary structure comprises 211 residues: Troponin I, cardiac muscle (211 aa).

The segment at M1–A25 is disordered. A2 carries the post-translational modification N-acetylalanine. Phosphoserine is present on residues S5 and S6. A phosphoserine; by PKA and PKD/PRKD1 mark is found at S23 and S24. Position 27 is a phosphotyrosine (Y27). T32 is modified (phosphothreonine; by STK4/MST1). The involved in binding TNC stretch occupies residues E33–R80. A phosphoserine; by PKC/PRKCE mark is found at S43 and S45. T52 carries the post-translational modification Phosphothreonine; by STK4/MST1. Position 78 is a phosphoserine (S78). Position 79 is a phosphothreonine (T79). T130 and T144 each carry phosphothreonine; by STK4/MST1. The interval T130 to S151 is involved in binding TNC and actin. S151 bears the Phosphoserine; by PAK3 mark. Phosphoserine is present on residues S167 and S200.

This sequence belongs to the troponin I family. Interacts with TRIM63. Binds to actin and tropomyosin. Interacts with STK4/MST1. Phosphorylated at Ser-23 and Ser-24 by PRKD1; phosphorylation reduces myofilament calcium sensitivity. Phosphorylated preferentially at Thr-32. Phosphorylation by STK4/MST1 alters its binding affinity to TNNC1 (cardiac Tn-C) and TNNT2 (cardiac Tn-T). Phosphorylated at Ser-43 and Ser-45 by PRKCE; phosphorylation increases myocardium contractile dysfunction.

Functionally, troponin I is the inhibitory subunit of troponin, the thin filament regulatory complex which confers calcium-sensitivity to striated muscle actomyosin ATPase activity. The polypeptide is Troponin I, cardiac muscle (Tnni3) (Rattus norvegicus (Rat)).